A 141-amino-acid chain; its full sequence is Large ribosomal subunit protein uL11 (141 aa).

Belongs to the universal ribosomal protein uL11 family. As to quaternary structure, part of the ribosomal stalk of the 50S ribosomal subunit. Interacts with L10 and the large rRNA to form the base of the stalk. L10 forms an elongated spine to which L12 dimers bind in a sequential fashion forming a multimeric L10(L12)X complex. One or more lysine residues are methylated.

Functionally, forms part of the ribosomal stalk which helps the ribosome interact with GTP-bound translation factors. The protein is Large ribosomal subunit protein uL11 of Roseobacter denitrificans (strain ATCC 33942 / OCh 114) (Erythrobacter sp. (strain OCh 114)).